A 184-amino-acid chain; its full sequence is ATP synthase subunit b, chloroplastic (184 aa).

A helical transmembrane segment spans residues 27–49; sequence LATNPINLSVVLGVLIFFGKGVL.

This sequence belongs to the ATPase B chain family. As to quaternary structure, F-type ATPases have 2 components, F(1) - the catalytic core - and F(0) - the membrane proton channel. F(1) has five subunits: alpha(3), beta(3), gamma(1), delta(1), epsilon(1). F(0) has four main subunits: a(1), b(1), b'(1) and c(10-14). The alpha and beta chains form an alternating ring which encloses part of the gamma chain. F(1) is attached to F(0) by a central stalk formed by the gamma and epsilon chains, while a peripheral stalk is formed by the delta, b and b' chains.

The protein resides in the plastid. It localises to the chloroplast thylakoid membrane. In terms of biological role, f(1)F(0) ATP synthase produces ATP from ADP in the presence of a proton or sodium gradient. F-type ATPases consist of two structural domains, F(1) containing the extramembraneous catalytic core and F(0) containing the membrane proton channel, linked together by a central stalk and a peripheral stalk. During catalysis, ATP synthesis in the catalytic domain of F(1) is coupled via a rotary mechanism of the central stalk subunits to proton translocation. Its function is as follows. Component of the F(0) channel, it forms part of the peripheral stalk, linking F(1) to F(0). The polypeptide is ATP synthase subunit b, chloroplastic (Carica papaya (Papaya)).